The chain runs to 161 residues: Nucleotide-binding protein Pput_4372 (161 aa).

It belongs to the YajQ family.

In terms of biological role, nucleotide-binding protein. The protein is Nucleotide-binding protein Pput_4372 of Pseudomonas putida (strain ATCC 700007 / DSM 6899 / JCM 31910 / BCRC 17059 / LMG 24140 / F1).